Consider the following 198-residue polypeptide: MSLARTLARRAAVQAVYQWQLARDSLPDIERQFVEELQLAKSLYRRHAEGFELSPPEREQLEELLEKFGRSQGTDEVEEEDVTLEQRASQCQVPDVQVGYFKELLHGVANNLALLDAALAKYLDRPIDEVDPVERAILRIGCYEFMRRPETPYRVILNEAINLAKEFGAAQSYRYVNGILDRVAHECRAVEMAARRRG.

The protein belongs to the NusB family.

Its function is as follows. Involved in transcription antitermination. Required for transcription of ribosomal RNA (rRNA) genes. Binds specifically to the boxA antiterminator sequence of the ribosomal RNA (rrn) operons. The chain is Transcription antitermination protein NusB from Methylococcus capsulatus (strain ATCC 33009 / NCIMB 11132 / Bath).